The following is a 38-amino-acid chain: Mu/omega-theraphotoxin-Mb1b (38 aa).

3 cysteine pairs are disulfide-bonded: C7–C21, C14–C26, and C20–C33. Serine amide is present on S38.

This sequence belongs to the neurotoxin 10 (Hwtx-1) family. 28 (Jztx-11) subfamily. Expressed by the venom gland.

It localises to the secreted. Functionally, paralytic toxin on insects that inhibits voltage-gated sodium (Nav) and calcium (Cav) channels in P.americana (American cockroach) dorsal unpaired median (DUM) neurons, and also inhibits the B.germanica (German cockroach) Nav channel (BgNaV1). May act as a gating-modifier toxin on Nav and as a pore blocker on Cav. In vivo, reversibly paralyzes both L.cuprina (Australian sheep blowfly) and M.domestica (housefly), but does not affect larvae of H.armigera (cotton bollworms). The sequence is that of Mu/omega-theraphotoxin-Mb1b from Monocentropus balfouri (Socotra Island blue baboon tarantula).